Reading from the N-terminus, the 82-residue chain is Sulfur carrier protein TusA (82 aa).

Residue C17 is the Cysteine persulfide intermediate of the active site.

This sequence belongs to the sulfur carrier protein TusA family.

It localises to the cytoplasm. Sulfur carrier protein which probably makes part of a sulfur-relay system. The chain is Sulfur carrier protein TusA from Glaesserella parasuis serovar 5 (strain SH0165) (Haemophilus parasuis).